A 227-amino-acid polypeptide reads, in one-letter code: Lipoprotein-releasing system ATP-binding protein LolD (227 aa).

Residues 5-227 form the ABC transporter domain; it reads LICQNITKHY…QDGILRESNS (223 aa). 41 to 48 contacts ATP; it reads GSSGSGKS.

This sequence belongs to the ABC transporter superfamily. Lipoprotein translocase (TC 3.A.1.125) family. In terms of assembly, the complex is composed of two ATP-binding proteins (LolD) and two transmembrane proteins (LolC and LolE).

Its subcellular location is the cell inner membrane. Part of the ABC transporter complex LolCDE involved in the translocation of mature outer membrane-directed lipoproteins, from the inner membrane to the periplasmic chaperone, LolA. Responsible for the formation of the LolA-lipoprotein complex in an ATP-dependent manner. This Histophilus somni (strain 129Pt) (Haemophilus somnus) protein is Lipoprotein-releasing system ATP-binding protein LolD.